A 497-amino-acid chain; its full sequence is Vacuolar-processing enzyme (497 aa).

The first 31 residues, 1–31 (METHKSLLFFTNYVLFLVFTLSFLPIPGLLA), serve as a signal peptide directing secretion. The active site involves histidine 180. Residue cysteine 222 is the Nucleophile of the active site. Cysteine 255 and cysteine 269 are oxidised to a cystine. N-linked (GlcNAc...) asparagine glycans are attached at residues asparagine 320 and asparagine 374. Intrachain disulfides connect cysteine 433-cysteine 463 and cysteine 445-cysteine 480.

Belongs to the peptidase C13 family.

Functionally, asparagine-specific endopeptidase involved in the processing of vacuolar seed protein precursors into the mature forms. This chain is Vacuolar-processing enzyme, found in Ricinus communis (Castor bean).